Consider the following 148-residue polypeptide: Deoxyuridine 5'-triphosphate nucleotidohydrolase (148 aa).

Residues 67 to 69, N80, 84 to 86, and M94 contribute to the substrate site; these read RSG and LID.

This sequence belongs to the dUTPase family. Mg(2+) serves as cofactor.

The catalysed reaction is dUTP + H2O = dUMP + diphosphate + H(+). It participates in pyrimidine metabolism; dUMP biosynthesis; dUMP from dCTP (dUTP route): step 2/2. This enzyme is involved in nucleotide metabolism: it produces dUMP, the immediate precursor of thymidine nucleotides and it decreases the intracellular concentration of dUTP so that uracil cannot be incorporated into DNA. The sequence is that of Deoxyuridine 5'-triphosphate nucleotidohydrolase from Burkholderia cenocepacia (strain HI2424).